A 318-amino-acid chain; its full sequence is Olfactory receptor 13C9 (318 aa).

Topologically, residues 1–25 (MEWENQTILVEFFLKGHSVHPRLEL) are extracellular. A glycan (N-linked (GlcNAc...) asparagine) is linked at Asn-5. The chain crosses the membrane as a helical span at residues 26–46 (LFFVLIFIMYVVILLGNGTLI). Residues 47–54 (LISILDPH) lie on the Cytoplasmic side of the membrane. A helical transmembrane segment spans residues 55 to 75 (LHTPMYFFLGNLSFLDICYTT). Residues 76–99 (TSIPSTLVSFLSERKTISFSGCAV) are Extracellular-facing. A disulfide bridge links Cys-97 with Cys-189. A helical membrane pass occupies residues 100 to 120 (QMFLGLAMGTTECVLLGMMAF). Topologically, residues 121–139 (DRYVAICNPLRYPIIMSKN) are cytoplasmic. Residues 140-160 (AYVPMAVGSWFAGIVNSAVQT) form a helical membrane-spanning segment. Topologically, residues 161-197 (TFVVQLPFCRKNVINHFSCEILAVMKLACADISGNEF) are extracellular. The chain crosses the membrane as a helical span at residues 198–217 (LMLVATILFTLMPLLLIVIS). Residues 218 to 237 (YSLIISSILKIHSSEGRSKA) lie on the Cytoplasmic side of the membrane. The helical transmembrane segment at 238 to 258 (FSTCSAHLTVVIIFYGTILFM) threads the bilayer. Over 259–277 (YMKPKSKETLNSDDLDATD) the chain is Extracellular. A helical transmembrane segment spans residues 278–298 (KIISMFYGVMTPMMNPLIYSL). At 299-318 (RNKDVKEAVKHLPNRRFFSK) the chain is on the cytoplasmic side.

It belongs to the G-protein coupled receptor 1 family.

The protein resides in the cell membrane. In terms of biological role, odorant receptor. The protein is Olfactory receptor 13C9 (OR13C9) of Homo sapiens (Human).